The primary structure comprises 442 residues: Trigger factor (442 aa).

The PPIase FKBP-type domain occupies 162–247; sequence GDQVTIDAIG…IKAVHTSEPT (86 aa).

Belongs to the FKBP-type PPIase family. Tig subfamily.

The protein localises to the cytoplasm. The catalysed reaction is [protein]-peptidylproline (omega=180) = [protein]-peptidylproline (omega=0). In terms of biological role, involved in protein export. Acts as a chaperone by maintaining the newly synthesized protein in an open conformation. Functions as a peptidyl-prolyl cis-trans isomerase. The protein is Trigger factor of Rickettsia canadensis (strain McKiel).